The primary structure comprises 931 residues: Protein translocase subunit SecA (931 aa).

Residues Gln87, 105 to 109, and Asp515 each bind ATP; that span reads GEGKT. Residues Cys915, Cys917, Cys926, and His927 each coordinate Zn(2+).

This sequence belongs to the SecA family. Monomer and homodimer. Part of the essential Sec protein translocation apparatus which comprises SecA, SecYEG and auxiliary proteins SecDF-YajC and YidC. The cofactor is Zn(2+).

The protein localises to the cell inner membrane. It localises to the cytoplasm. The catalysed reaction is ATP + H2O + cellular proteinSide 1 = ADP + phosphate + cellular proteinSide 2.. Its function is as follows. Part of the Sec protein translocase complex. Interacts with the SecYEG preprotein conducting channel. Has a central role in coupling the hydrolysis of ATP to the transfer of proteins into and across the cell membrane, serving both as a receptor for the preprotein-SecB complex and as an ATP-driven molecular motor driving the stepwise translocation of polypeptide chains across the membrane. The chain is Protein translocase subunit SecA from Burkholderia ambifaria (strain ATCC BAA-244 / DSM 16087 / CCUG 44356 / LMG 19182 / AMMD) (Burkholderia cepacia (strain AMMD)).